Reading from the N-terminus, the 50-residue chain is uncharacterized protein (50 aa).

Residues 1–22 form the signal peptide; that stretch reads MSKVAALGWGTLVYLGVGLLLA.

This is an uncharacterized protein from Dictyostelium discoideum (Social amoeba).